Reading from the N-terminus, the 176-residue chain is Co-chaperone protein HscB (176 aa).

Positions 2-74 (DYFTLFGLPA…LMRAEYLLSL (73 aa)) constitute a J domain.

Belongs to the HscB family. In terms of assembly, interacts with HscA and stimulates its ATPase activity. Interacts with IscU.

Its function is as follows. Co-chaperone involved in the maturation of iron-sulfur cluster-containing proteins. Seems to help targeting proteins to be folded toward HscA. This is Co-chaperone protein HscB from Escherichia coli O7:K1 (strain IAI39 / ExPEC).